Here is a 426-residue protein sequence, read N- to C-terminus: D-tagatose-1,6-bisphosphate aldolase subunit KbaZ (426 aa).

Belongs to the GatZ/KbaZ family. KbaZ subfamily. In terms of assembly, forms a complex with KbaY.

Its pathway is carbohydrate metabolism; D-tagatose 6-phosphate degradation; D-glyceraldehyde 3-phosphate and glycerone phosphate from D-tagatose 6-phosphate: step 2/2. Functionally, component of the tagatose-1,6-bisphosphate aldolase KbaYZ that is required for full activity and stability of the Y subunit. Could have a chaperone-like function for the proper and stable folding of KbaY. When expressed alone, KbaZ does not show any aldolase activity. This chain is D-tagatose-1,6-bisphosphate aldolase subunit KbaZ, found in Escherichia coli O81 (strain ED1a).